The primary structure comprises 142 residues: MCHAAPARPGDGRGLPRAGDNFSGAARSKPVGAAFEQRARQFLERRGLVFVAANVTMRGGELDLVMREPDGMLVFVEVRARRSARHGGAAASVGWRKRRRLVAAALQFWARHGAGAACRFDVVAFEAGQLAWLRDAFRADDA.

Residues 1–27 are disordered; the sequence is MCHAAPARPGDGRGLPRAGDNFSGAAR.

The protein belongs to the UPF0102 family.

The sequence is that of UPF0102 protein Bcep18194_A3391 from Burkholderia lata (strain ATCC 17760 / DSM 23089 / LMG 22485 / NCIMB 9086 / R18194 / 383).